We begin with the raw amino-acid sequence, 295 residues long: Acetylglutamate kinase (295 aa).

Substrate-binding positions include glycine 66–glycine 67, arginine 88, and asparagine 193.

Belongs to the acetylglutamate kinase family. ArgB subfamily.

Its subcellular location is the cytoplasm. The catalysed reaction is N-acetyl-L-glutamate + ATP = N-acetyl-L-glutamyl 5-phosphate + ADP. Its pathway is amino-acid biosynthesis; L-arginine biosynthesis; N(2)-acetyl-L-ornithine from L-glutamate: step 2/4. Functionally, catalyzes the ATP-dependent phosphorylation of N-acetyl-L-glutamate. This Rhizobium rhizogenes (strain K84 / ATCC BAA-868) (Agrobacterium radiobacter) protein is Acetylglutamate kinase.